We begin with the raw amino-acid sequence, 2079 residues long: Protein xmas (2079 aa).

In terms of domain architecture, RRM spans 12–83 (KTLLCRNIPE…HLFDISYADN (72 aa)). The tract at residues 112 to 152 (NEYGSGKPIKKPQNGSSGSGGSSMLPAIPVGPATAPVSRDR) is disordered. Residues 342–525 (DSKINAENLT…ETEYKLPRQY (184 aa)) form the PCI domain. Residues 835 to 1359 (PLSFGAENPE…RRDASDHKHA (525 aa)) form a sufficient for Orc3 binding region. Disordered regions lie at residues 1335–1360 (RHTL…KHAM), 1755–1778 (AEET…SKRA), 1930–1963 (KAQA…TSKA), and 2032–2079 (SAAA…TGKL). Positions 1764-1776 (HHRHHGGGQKMSK) are enriched in basic residues. Residues 2048-2059 (PVVSPKVQVPSV) are compositionally biased toward low complexity. A compositionally biased stretch (polar residues) spans 2070 to 2079 (GPQTTKTGKL).

It belongs to the SAC3 family. Component of the nuclear pore complex (NPC)-associated TREX-2/AMEX complex (anchoring and mRNA export complex), composed of e(y)2, xmas and PCID2. Within the TREX-2/ AMEX complex, interactions with e(y)2 is required for localization of e(y)2 to the nuclear periphery. Interaction between the TREX-2/AMEX complex and the ORC complex is required for ORC localization to mRNPs, and consequently mRNA export. Within the TREX-2/AMEX-ORC complex, interacts with Orc6, (via C-terminus) with Orc3, and weakly interacts with Orc4. However, another report found that the interaction with Orc3 is not direct, instead it is mediated via e(y)2. Interacts with piwi. In terms of tissue distribution, expressed in ovaries (at protein level). Detected in the testes and ovaries, with expression levels higher in oocytes than in testicular cells (at protein level). As to expression, detected in the testes and ovaries (at protein level). In terms of tissue distribution, detected in the testes.

The protein localises to the nucleus. It localises to the nucleoplasm. Its subcellular location is the nucleus membrane. It is found in the cytoplasm. Involved in mRNA export and mRNA coupled transcription activation. Component of the nuclear pore complex (NPC)-associated TREX-2/AMEX complex (anchoring and mRNA export complex) which functions in docking export-competent ribonucleoprotein particles (mRNPs) to the nuclear entrance of the nuclear pore complex (nuclear basket), thereby enabling the export of mRNAs to the cytoplasm through the nuclear pores. The TREX-2/AMEX complex also functions with the transcriptional coactivator SAGA/TFTC complex, to anchor a subset of transcription sites to the nuclear pore complex basket in order to achieve efficient transcription and export of their resulting mRNAs. Within the complex, required for localization of e(y)2 to the nuclear periphery. This is Protein xmas from Drosophila melanogaster (Fruit fly).